A 332-amino-acid chain; its full sequence is UPF0194 membrane protein YbhG (332 aa).

The N-terminal stretch at 1–16 is a signal peptide; it reads MMKKPVVIGLAVVVLA. Residues 141–210 adopt a coiled-coil conformation; sequence RTISANDLEN…NLQDSTLIAP (70 aa).

Belongs to the UPF0194 family.

Its subcellular location is the periplasm. The polypeptide is UPF0194 membrane protein YbhG (ybhG) (Shigella flexneri).